The sequence spans 95 residues: Selenoprotein K (95 aa).

A helical transmembrane segment spans residues 20–42 (LSFITDFFWGIAEFVVLFFRTLL). The segment at 47-95 (KKRRGYGSSSDSRYDDGRGPPGNPPRRRMGRINHLQGPNPPPMAGGUGR) is disordered. A non-standard amino acid (selenocysteine) is located at residue selenocysteine 93.

This sequence belongs to the selenoprotein K family. As to quaternary structure, interacts with DERL1, DERL2, DERL3 and SELENOS. The SELENOK-SELENOS complex interacts with VCP. Interacts with ZDHHC6. Post-translationally, cleaved by CAPN2/m-calpain in resting macrophages but not in activated macrophages. Macrophage activation up-regulates expression of the calpain inhibitor CAST/calpastatin, resulting in inhibition of CAPN2 activity. In terms of processing, truncated SELENOK proteins produced by failed UGA/Sec decoding are ubiquitinated by the CRL2(KLHDC2) complex, which recognizes the diglycine (Gly-Gly) at the C-terminus of truncated SELENOK proteins.

It localises to the endoplasmic reticulum membrane. The protein resides in the cell membrane. Its function is as follows. Required for Ca(2+) flux in immune cells and plays a role in T-cell proliferation and in T-cell and neutrophil migration. Involved in endoplasmic reticulum-associated degradation (ERAD) of soluble glycosylated proteins. Required for palmitoylation and cell surface expression of CD36 and involved in macrophage uptake of low-density lipoprotein and in foam cell formation. Together with ZDHHC6, required for palmitoylation of ITPR1 in immune cells, leading to regulate ITPR1 stability and function. Plays a role in protection of cells from ER stress-induced apoptosis. Protects cells from oxidative stress when overexpressed in cardiomyocytes. In Bos taurus (Bovine), this protein is Selenoprotein K.